Reading from the N-terminus, the 228-residue chain is 2,3-bisphosphoglycerate-dependent phosphoglycerate mutase (228 aa).

Residues 8 to 15 (RHGQSEWN), 21 to 22 (TG), arginine 60, 87 to 90 (ERHY), lysine 98, 114 to 115 (RR), and 183 to 184 (GN) each bind substrate. Catalysis depends on histidine 9, which acts as the Tele-phosphohistidine intermediate. The active-site Proton donor/acceptor is the glutamate 87.

This sequence belongs to the phosphoglycerate mutase family. BPG-dependent PGAM subfamily.

It carries out the reaction (2R)-2-phosphoglycerate = (2R)-3-phosphoglycerate. The protein operates within carbohydrate degradation; glycolysis; pyruvate from D-glyceraldehyde 3-phosphate: step 3/5. Catalyzes the interconversion of 2-phosphoglycerate and 3-phosphoglycerate. This chain is 2,3-bisphosphoglycerate-dependent phosphoglycerate mutase, found in Staphylococcus haemolyticus (strain JCSC1435).